The following is a 401-amino-acid chain: Multidrug resistance protein MdtH (401 aa).

Helical transmembrane passes span 13-33, 34-54, 99-116, 139-159, 165-185, 214-234, 243-263, 277-297, 299-319, 340-360, and 368-388; these read YFLL…FPLI, SIRF…ALGL, PWIL…GTLF, LLMM…SWLL, FVCW…AWLL, VLTL…LPIV, AAVK…LYPL, LMAG…ITHL, TLFM…PARE, LGLA…YDTG, and LPWF…YWQF.

The protein belongs to the major facilitator superfamily. DHA1 family. MdtH (TC 2.A.1.2.21) subfamily.

The protein resides in the cell inner membrane. The chain is Multidrug resistance protein MdtH from Yersinia pseudotuberculosis serotype O:1b (strain IP 31758).